The primary structure comprises 117 residues: MFSIIFIALLILLITTIVMFLASILSKKALIDREKSSPFECGFDPKSSSRLPFSLRFFLITIIFLIFDVEIALILPMIIIMKYSNIMIWTITSIIFILILLIGLYHEWNQGMLNWSN.

The next 3 helical transmembrane spans lie at 4–24 (IIFI…LASI), 60–80 (ITII…MIII), and 86–106 (IMIW…GLYH).

It belongs to the complex I subunit 3 family.

The protein resides in the mitochondrion membrane. It carries out the reaction a ubiquinone + NADH + 5 H(+)(in) = a ubiquinol + NAD(+) + 4 H(+)(out). Core subunit of the mitochondrial membrane respiratory chain NADH dehydrogenase (Complex I) that is believed to belong to the minimal assembly required for catalysis. Complex I functions in the transfer of electrons from NADH to the respiratory chain. The immediate electron acceptor for the enzyme is believed to be ubiquinone. The chain is NADH-ubiquinone oxidoreductase chain 3 (mt:ND3) from Drosophila melanogaster (Fruit fly).